Reading from the N-terminus, the 427-residue chain is CCA-adding enzyme (427 aa).

Residues serine 50 and lysine 53 each contribute to the ATP site. Residues serine 50 and lysine 53 each contribute to the CTP site. Positions 61, 63, and 112 each coordinate Mg(2+). Histidine 135, lysine 155, and tyrosine 164 together coordinate ATP. 3 residues coordinate CTP: histidine 135, lysine 155, and tyrosine 164.

This sequence belongs to the tRNA nucleotidyltransferase/poly(A) polymerase family. Archaeal CCA-adding enzyme subfamily. As to quaternary structure, homodimer. Mg(2+) is required as a cofactor.

It carries out the reaction a tRNA precursor + 2 CTP + ATP = a tRNA with a 3' CCA end + 3 diphosphate. The enzyme catalyses a tRNA with a 3' CCA end + 2 CTP + ATP = a tRNA with a 3' CCACCA end + 3 diphosphate. Functionally, catalyzes the addition and repair of the essential 3'-terminal CCA sequence in tRNAs without using a nucleic acid template. Adds these three nucleotides in the order of C, C, and A to the tRNA nucleotide-73, using CTP and ATP as substrates and producing inorganic pyrophosphate. tRNA 3'-terminal CCA addition is required both for tRNA processing and repair. Also involved in tRNA surveillance by mediating tandem CCA addition to generate a CCACCA at the 3' terminus of unstable tRNAs. While stable tRNAs receive only 3'-terminal CCA, unstable tRNAs are marked with CCACCA and rapidly degraded. This chain is CCA-adding enzyme, found in Picrophilus torridus (strain ATCC 700027 / DSM 9790 / JCM 10055 / NBRC 100828 / KAW 2/3).